A 212-amino-acid chain; its full sequence is uncharacterized protein (212 aa).

Cysteine 52 functions as the Acyl-thioester intermediate in the catalytic mechanism. Residues histidine 89 and aspartate 104 contribute to the active site.

This sequence belongs to the arylamine N-acetyltransferase family.

This is an uncharacterized protein from Acanthamoeba polyphaga (Amoeba).